A 315-amino-acid polypeptide reads, in one-letter code: Protoheme IX farnesyltransferase (315 aa).

Helical transmembrane passes span 32 to 52 (VMSL…GHMN), 53 to 73 (PVLA…SGAL), 93 to 113 (IPAG…LSAF), 120 to 140 (LMVN…YAVI), 153 to 173 (IVIG…AATG), 180 to 200 (LVLF…LSLF), 226 to 246 (ALFY…MGFA), 249 to 269 (FYGV…WRLW), and 295 to 315 (IFAV…FGVF).

Belongs to the UbiA prenyltransferase family. Protoheme IX farnesyltransferase subfamily.

Its subcellular location is the cell inner membrane. The enzyme catalyses heme b + (2E,6E)-farnesyl diphosphate + H2O = Fe(II)-heme o + diphosphate. It functions in the pathway porphyrin-containing compound metabolism; heme O biosynthesis; heme O from protoheme: step 1/1. Its function is as follows. Converts heme B (protoheme IX) to heme O by substitution of the vinyl group on carbon 2 of heme B porphyrin ring with a hydroxyethyl farnesyl side group. In Brucella suis (strain ATCC 23445 / NCTC 10510), this protein is Protoheme IX farnesyltransferase.